The following is a 200-amino-acid chain: Lipopolysaccharide core heptose(II)-phosphate phosphatase (200 aa).

A signal peptide spans 1 to 25; that stretch reads MLAFCRSSLKSKKYFIILLALAAIA.

It belongs to the phosphoglycerate mutase family. Ais subfamily.

The protein localises to the periplasm. It functions in the pathway bacterial outer membrane biogenesis; lipopolysaccharide metabolism. In terms of biological role, catalyzes the dephosphorylation of heptose(II) of the outer membrane lipopolysaccharide core. This chain is Lipopolysaccharide core heptose(II)-phosphate phosphatase, found in Escherichia coli O9:H4 (strain HS).